Reading from the N-terminus, the 118-residue chain is MAGRSGDSDEDLLKAVRLIKFLYQSNPPPSPEGTRQARRNRRRRWRARQRQIREIAERILGTYLGRPAEPVPLQLPPLERLNLNCSEDCRTSGTQGVGHPQISVESPTVLESGTEEQC.

Residues Ser-5 and Ser-8 each carry the phosphoserine; by host CK2 modification. The tract at residues 18-26 (LIKFLYQSN) is homomultimerization. Residues 23–46 (YQSNPPPSPEGTRQARRNRRRRWR) are disordered. The Nuclear localization signal and RNA-binding (RRE) signature appears at 34–50 (TRQARRNRRRRWRARQR). The segment covering 36–46 (QARRNRRRRWR) has biased composition (basic residues). The short motif at 73–84 (LQLPPLERLNLN) is the Nuclear export signal and binding to XPO1 element. The tract at residues 87-118 (EDCRTSGTQGVGHPQISVESPTVLESGTEEQC) is disordered. Ser-92 bears the Phosphoserine; by host mark. Polar residues predominate over residues 103–112 (SVESPTVLES).

The protein belongs to the HIV-1 REV protein family. As to quaternary structure, homomultimer; when bound to the RRE. Multimeric assembly is essential for activity and may involve XPO1. Binds to human KPNB1, XPO1, TNPO1, RANBP5 and IPO7. Interacts with the viral Integrase. Interacts with human KHDRBS1. Interacts with human NAP1; this interaction decreases Rev multimerization and stimulates its activity. Interacts with human DEAD-box helicases DDX3 and DDX24; these interactions may serve for viral RNA export to the cytoplasm and packaging, respectively. Interacts with human PSIP1; this interaction may inhibit HIV-1 DNA integration by promoting dissociation of the Integrase-LEDGF/p75 complex. Post-translationally, asymmetrically arginine dimethylated at one site by host PRMT6. Methylation impairs the RNA-binding activity and export of viral RNA from the nucleus to the cytoplasm. In terms of processing, phosphorylated by protein kinase CK2. Presence of, and maybe binding to the N-terminus of the regulatory beta subunit of CK2 is necessary for CK2-mediated Rev's phosphorylation.

Its subcellular location is the host nucleus. The protein resides in the host nucleolus. The protein localises to the host cytoplasm. In terms of biological role, escorts unspliced or incompletely spliced viral pre-mRNAs (late transcripts) out of the nucleus of infected cells. These pre-mRNAs carry a recognition sequence called Rev responsive element (RRE) located in the env gene, that is not present in fully spliced viral mRNAs (early transcripts). This function is essential since most viral proteins are translated from unspliced or partially spliced pre-mRNAs which cannot exit the nucleus by the pathway used by fully processed cellular mRNAs. Rev itself is translated from a fully spliced mRNA that readily exits the nucleus. Rev's nuclear localization signal (NLS) binds directly to KPNB1/Importin beta-1 without previous binding to KPNA1/Importin alpha-1. KPNB1 binds to the GDP bound form of RAN (Ran-GDP) and targets Rev to the nucleus. In the nucleus, the conversion from Ran-GDP to Ran-GTP dissociates Rev from KPNB1 and allows Rev's binding to the RRE in viral pre-mRNAs. Rev multimerization on the RRE via cooperative assembly exposes its nuclear export signal (NES) to the surface. Rev can then form a complex with XPO1/CRM1 and Ran-GTP, leading to nuclear export of the complex. Conversion from Ran-GTP to Ran-GDP mediates dissociation of the Rev/RRE/XPO1/RAN complex, so that Rev can return to the nucleus for a subsequent round of export. Beside KPNB1, also seems to interact with TNPO1/Transportin-1, RANBP5/IPO5 and IPO7/RANBP7 for nuclear import. The nucleoporin-like HRB/RIP is an essential cofactor that probably indirectly interacts with Rev to release HIV RNAs from the perinuclear region to the cytoplasm. This chain is Protein Rev, found in Human immunodeficiency virus type 1 group M subtype D (isolate ELI) (HIV-1).